The following is a 463-amino-acid chain: Probable mannan endo-1,4-beta-mannosidase F (463 aa).

Residues 1–18 form the signal peptide; it reads MRSLSSIALLSVVGAASA. The CBM1 domain occupies 19 to 54; it reads QAGPWAQCGGKSFSGSSECASGWKCQELNEWFSQCV. The segment at 57-78 is disordered; sequence AESTTPTVSSTPTPTDAPSVSI. A compositionally biased stretch (low complexity) spans 59–77; it reads STTPTVSSTPTPTDAPSVS. The tract at residues 75–118 is ser-rich linker; the sequence is SVSITASATTGINKSISVSSASKSTPLPSSSSASPSPRPTGSGS. The N-linked (GlcNAc...) asparagine glycan is linked to Asn-87. The span at 93–118 shows a compositional bias: low complexity; it reads SSASKSTPLPSSSSASPSPRPTGSGS. Residues 93-121 are disordered; the sequence is SSASKSTPLPSSSSASPSPRPTGSGSFAK. The segment at 119 to 463 is catalytic; that stretch reads FAKADGLQFS…MDHMENVNKN (345 aa). The substrate site is built by Trp-171 and Asn-285. Glu-286 functions as the Proton donor in the catalytic mechanism. Tyr-361 contacts substrate. The active-site Nucleophile is the Glu-395. A substrate-binding site is contributed by Trp-424.

The protein belongs to the glycosyl hydrolase 5 (cellulase A) family.

It localises to the secreted. The catalysed reaction is Random hydrolysis of (1-&gt;4)-beta-D-mannosidic linkages in mannans, galactomannans and glucomannans.. Functionally, endo-1,4-mannanase, a crucial enzyme for depolymerization of seed galactomannans and wood galactoglucomannans. In Aspergillus flavus (strain ATCC 200026 / FGSC A1120 / IAM 13836 / NRRL 3357 / JCM 12722 / SRRC 167), this protein is Probable mannan endo-1,4-beta-mannosidase F (manF).